Reading from the N-terminus, the 116-residue chain is Ribosome-binding factor A (116 aa).

It belongs to the RbfA family. Monomer. Binds 30S ribosomal subunits, but not 50S ribosomal subunits or 70S ribosomes.

Its subcellular location is the cytoplasm. In terms of biological role, one of several proteins that assist in the late maturation steps of the functional core of the 30S ribosomal subunit. Associates with free 30S ribosomal subunits (but not with 30S subunits that are part of 70S ribosomes or polysomes). Required for efficient processing of 16S rRNA. May interact with the 5'-terminal helix region of 16S rRNA. The chain is Ribosome-binding factor A from Streptococcus pyogenes serotype M28 (strain MGAS6180).